The primary structure comprises 553 residues: Phosphoglucomutase (553 aa).

A disordered region spans residues 1 to 25; that stretch reads MQATIKRYPTSPISGQTLGTSGLRK. The segment covering 11-20 has biased composition (polar residues); that stretch reads SPISGQTLGT. Residues Thr20, Arg24, 117–118, and Lys131 each bind substrate; that span reads SH. Ser117 functions as the Phosphoserine intermediate in the catalytic mechanism. Ser117 contributes to the Mg(2+) binding site. The Mg(2+) site is built by Asp289, Asp291, and Asp293. Substrate is bound by residues 293 to 294, Thr352, 371 to 373, Lys384, and Arg509; these read DR and EES.

Belongs to the phosphohexose mutase family. Requires Mg(2+) as cofactor.

The protein localises to the cytoplasm. It carries out the reaction alpha-D-glucose 1-phosphate = alpha-D-glucose 6-phosphate. Its function is as follows. Catalyzes the reversible conversion of glucose 1-phosphate into glucose 6-phosphate. This enzyme participates in both the breakdown and synthesis of glucose. The chain is Phosphoglucomutase from Entamoeba histolytica (strain ATCC 30459 / HM-1:IMSS / ABRM).